The primary structure comprises 94 residues: Small ribosomal subunit protein bS18 (94 aa).

It belongs to the bacterial ribosomal protein bS18 family. Part of the 30S ribosomal subunit. Forms a tight heterodimer with protein bS6.

Functionally, binds as a heterodimer with protein bS6 to the central domain of the 16S rRNA, where it helps stabilize the platform of the 30S subunit. In Leptothrix cholodnii (strain ATCC 51168 / LMG 8142 / SP-6) (Leptothrix discophora (strain SP-6)), this protein is Small ribosomal subunit protein bS18.